Consider the following 100-residue polypeptide: MYB-like transcription factor TCL2 (100 aa).

Residues 37–74 (TEQEEDLIFRMHRLVGDRWDLIAGRVVGREAKDIERYW) enclose the Myb-like domain.

Interacts with GL3. As to expression, expressed in cotyledons, petioles, rosette leaves, hydathodes, cauline leaves, stems, pedicels and flower buds.

The protein localises to the nucleus. MYB-type transcription factor involved in trichome cell specification. Acts as a negative regulator of trichome patterning and formation. May function by suppressing the expression of GL3. This chain is MYB-like transcription factor TCL2 (TCL2), found in Arabidopsis thaliana (Mouse-ear cress).